We begin with the raw amino-acid sequence, 556 residues long: Arginine--tRNA ligase (556 aa).

Positions 132 to 142 (ANPTGDLHLGH) match the 'HIGH' region motif.

This sequence belongs to the class-I aminoacyl-tRNA synthetase family. Monomer.

Its subcellular location is the cytoplasm. The enzyme catalyses tRNA(Arg) + L-arginine + ATP = L-arginyl-tRNA(Arg) + AMP + diphosphate. This Listeria monocytogenes serotype 4a (strain HCC23) protein is Arginine--tRNA ligase.